The following is a 210-amino-acid chain: Thymidylate kinase (210 aa).

Position 11–18 (11–18 (GVDGSGKS)) interacts with ATP.

Belongs to the thymidylate kinase family.

The catalysed reaction is dTMP + ATP = dTDP + ADP. Its function is as follows. Phosphorylation of dTMP to form dTDP in both de novo and salvage pathways of dTTP synthesis. This is Thymidylate kinase from Mycoplasmoides gallisepticum (strain R(low / passage 15 / clone 2)) (Mycoplasma gallisepticum).